The following is a 364-amino-acid chain: Glutamine synthetase (364 aa).

Positions 15–94 constitute a GS beta-grasp domain; that stretch reads VLAEYIWIDA…VLAECWNNDG (80 aa). Positions 101 to 364 constitute a GS catalytic domain; that stretch reads HRHECAKLMS…ETKRGEEEGF (264 aa).

Belongs to the glutamine synthetase family. In terms of assembly, homooctamer.

It is found in the cytoplasm. The enzyme catalyses L-glutamate + NH4(+) + ATP = L-glutamine + ADP + phosphate + H(+). This Yarrowia lipolytica (strain CLIB 122 / E 150) (Yeast) protein is Glutamine synthetase (GLN1).